A 289-amino-acid polypeptide reads, in one-letter code: Acetyl-coenzyme A carboxylase carboxyl transferase subunit beta (289 aa).

In terms of domain architecture, CoA carboxyltransferase N-terminal spans 34-289 (MWVKCNKCGE…KLINMHKNSF (256 aa)). 4 residues coordinate Zn(2+): cysteine 38, cysteine 41, cysteine 57, and cysteine 60. The C4-type zinc finger occupies 38-60 (CNKCGEILYQNDLEKNYMACNLC).

Belongs to the AccD/PCCB family. Acetyl-CoA carboxylase is a heterohexamer composed of biotin carboxyl carrier protein (AccB), biotin carboxylase (AccC) and two subunits each of ACCase subunit alpha (AccA) and ACCase subunit beta (AccD). It depends on Zn(2+) as a cofactor.

The protein localises to the cytoplasm. It catalyses the reaction N(6)-carboxybiotinyl-L-lysyl-[protein] + acetyl-CoA = N(6)-biotinyl-L-lysyl-[protein] + malonyl-CoA. It functions in the pathway lipid metabolism; malonyl-CoA biosynthesis; malonyl-CoA from acetyl-CoA: step 1/1. Its function is as follows. Component of the acetyl coenzyme A carboxylase (ACC) complex. Biotin carboxylase (BC) catalyzes the carboxylation of biotin on its carrier protein (BCCP) and then the CO(2) group is transferred by the transcarboxylase to acetyl-CoA to form malonyl-CoA. This is Acetyl-coenzyme A carboxylase carboxyl transferase subunit beta from Clostridium botulinum (strain Loch Maree / Type A3).